The following is a 172-amino-acid chain: Translationally-controlled tumor protein (172 aa).

The TCTP domain occupies 1–172 (MIIYRDLISH…FKDGLEMEKC (172 aa)). Residue serine 46 is modified to Phosphoserine; by PLK1. The residue at position 53 (serine 53) is a Phosphoserine. Position 64 is a phosphoserine; by PLK1 (serine 64). The required for reduction of TSC22D1 protein stability stretch occupies residues 70-172 (VDIVMNHHLQ…FKDGLEMEKC (103 aa)).

This sequence belongs to the TCTP family. As to quaternary structure, homodimer. Interacts with STEAP3. Interacts with TSC22D1; interaction results in the destabilization of TSC22D1 protein.

Its subcellular location is the cytoplasm. Functionally, involved in calcium binding and microtubule stabilization. Acts as a negative regulator of TSC22D1-mediated apoptosis, via interaction with and destabilization of TSC22D1 protein. This Oryctolagus cuniculus (Rabbit) protein is Translationally-controlled tumor protein (TPT1).